The sequence spans 617 residues: Na(+)/H(+) antiporter NhaA 1 (617 aa).

A na(+)/H(+) antiporter NhaA region spans residues 1 to 433 (MTVTEQTTAR…GWAIFRITDW (433 aa)). 11 helical membrane-spanning segments follow: residues 33–53 (AAALLLTFTVIAILWANSPWA), 75–95 (MTVKHLVNDALMTFFFFIVGL), 113–133 (AVPVVAAAAGLIVPAIVFLAF), 141–161 (HAWGVVISTDTAFLVGALAII), 171–191 (LFLLTLAVVDDVGALVAIAVF), 194–214 (DAIQVGPLVVAVAVLVALALV), 234–254 (VALYLAGIHPTLAGVAVALLI), 304–324 (VGPAVSFVILPLFALVNAGVL), 340–360 (WGVVAGLVIGKFVGITGATWL), 378–398 (IAGGAALSGIGFTISLFIVDI), and 411–431 (IGVLAASVLAFVFGWAIFRIT). One can recognise a Thioredoxin domain in the interval 434–617 (LSPPEPVGLK…LIRALEAGRR (184 aa)).

In the N-terminal section; belongs to the NhaA Na(+)/H(+) (TC 2.A.33) antiporter family.

It is found in the cell membrane. The catalysed reaction is Na(+)(in) + 2 H(+)(out) = Na(+)(out) + 2 H(+)(in). Functionally, na(+)/H(+) antiporter that extrudes sodium in exchange for external protons. In Mycolicibacterium vanbaalenii (strain DSM 7251 / JCM 13017 / BCRC 16820 / KCTC 9966 / NRRL B-24157 / PYR-1) (Mycobacterium vanbaalenii), this protein is Na(+)/H(+) antiporter NhaA 1.